Here is a 50-residue protein sequence, read N- to C-terminus: Photosystem II reaction center protein M (50 aa).

Residues 7 to 27 traverse the membrane as a helical segment; sequence GFVASLLFVGIPTIFLIGLFI.

Belongs to the PsbM family. As to quaternary structure, PSII is composed of 1 copy each of membrane proteins PsbA, PsbB, PsbC, PsbD, PsbE, PsbF, PsbH, PsbI, PsbJ, PsbK, PsbL, PsbM, PsbT, PsbX, PsbY, Psb30/Ycf12, peripheral proteins PsbO, CyanoQ (PsbQ), PsbU, PsbV and a large number of cofactors. It forms dimeric complexes.

The protein resides in the cellular thylakoid membrane. In terms of biological role, one of the components of the core complex of photosystem II (PSII). PSII is a light-driven water:plastoquinone oxidoreductase that uses light energy to abstract electrons from H(2)O, generating O(2) and a proton gradient subsequently used for ATP formation. It consists of a core antenna complex that captures photons, and an electron transfer chain that converts photonic excitation into a charge separation. This subunit is found at the monomer-monomer interface. This is Photosystem II reaction center protein M from Prochlorococcus marinus subsp. pastoris (strain CCMP1986 / NIES-2087 / MED4).